Reading from the N-terminus, the 301-residue chain is Protein ARMCX6 (301 aa).

Residues 1–6 (MGRARE) form a mitochondrion outer membrane (MOM)-targeting sequence region. The Mitochondrial intermembrane segment spans residues 1–7 (MGRAREM). The helical; Signal-anchor transmembrane segment at 8–25 (GWMAAGLMIGAGACYCMY) threads the bilayer. A mitochondrion outer membrane (MOM)-targeting sequence region spans residues 26-36 (KLTMGRDEGNE). At 26 to 301 (KLTMGRDEGN…REMLVEAISP (276 aa)) the chain is on the cytoplasmic side. The segment at 70 to 105 (SEDGEWDEPGAPGGTEDRRSGGGKANRAHPTKQRPF) is disordered.

The protein belongs to the eutherian X-chromosome-specific Armcx family.

Its subcellular location is the mitochondrion. The protein resides in the mitochondrion outer membrane. Its function is as follows. May regulate the dynamics and distribution of mitochondria in neural cells. In Rattus norvegicus (Rat), this protein is Protein ARMCX6 (Armcx6).